A 158-amino-acid polypeptide reads, in one-letter code: S-ribosylhomocysteine lyase (158 aa).

His56, His60, and Cys125 together coordinate Fe cation.

It belongs to the LuxS family. As to quaternary structure, homodimer. Fe cation serves as cofactor.

It carries out the reaction S-(5-deoxy-D-ribos-5-yl)-L-homocysteine = (S)-4,5-dihydroxypentane-2,3-dione + L-homocysteine. Functionally, involved in the synthesis of autoinducer 2 (AI-2) which is secreted by bacteria and is used to communicate both the cell density and the metabolic potential of the environment. The regulation of gene expression in response to changes in cell density is called quorum sensing. Catalyzes the transformation of S-ribosylhomocysteine (RHC) to homocysteine (HC) and 4,5-dihydroxy-2,3-pentadione (DPD). In Leuconostoc mesenteroides subsp. mesenteroides (strain ATCC 8293 / DSM 20343 / BCRC 11652 / CCM 1803 / JCM 6124 / NCDO 523 / NBRC 100496 / NCIMB 8023 / NCTC 12954 / NRRL B-1118 / 37Y), this protein is S-ribosylhomocysteine lyase.